The following is a 164-amino-acid chain: Diphosphoinositol polyphosphate phosphohydrolase 3-beta (164 aa).

Residues R9, 17–19, and 38–40 contribute to the substrate site; these read KKR and SSR. One can recognise a Nudix hydrolase domain in the interval 17–144; it reads KKRAACLCFR…VHAEYLQKLK (128 aa). 2 residues coordinate Mg(2+): G49 and E65. A Nudix box motif is present at residues 50-71; it reads GGMEPEEEPGGAAVREVFEEAG. E68 serves as the catalytic Proton acceptor. Residue E69 participates in Mg(2+) binding. Residues 89 to 91, R115, and K133 contribute to the substrate site; that span reads RKH. The tract at residues 144-164 is disordered; the sequence is KLGGSPTNGNSVAPSPPEGDP.

This sequence belongs to the Nudix hydrolase family. DIPP subfamily. Requires Mg(2+) as cofactor. Mn(2+) serves as cofactor.

The protein resides in the cytoplasm. It carries out the reaction diphospho-myo-inositol polyphosphate + H2O = myo-inositol polyphosphate + phosphate.. It catalyses the reaction P(1),P(6)-bis(5'-adenosyl) hexaphosphate + H2O = adenosine 5'-pentaphosphate + AMP + 2 H(+). The catalysed reaction is P(1),P(5)-bis(5'-adenosyl) pentaphosphate + H2O = adenosine 5'-tetraphosphate + AMP + 2 H(+). Cleaves a beta-phosphate from the diphosphate groups in PP-InsP5 (diphosphoinositol pentakisphosphate), suggesting that it may play a role in signal transduction. Also able to catalyze the hydrolysis of dinucleoside oligophosphates, with Ap6A and Ap5A being the preferred substrates. The major reaction products are ADP and p4a from Ap6A and ADP and ATP from Ap5A. Also able to hydrolyze 5-phosphoribose 1-diphosphate. The sequence is that of Diphosphoinositol polyphosphate phosphohydrolase 3-beta from Bos taurus (Bovine).